The sequence spans 108 residues: U-scoloptoxin(16)-Er10a (108 aa).

A signal peptide spans 1-24; the sequence is MASFTSFCVLFTFCLLLLAHQARS.

This sequence belongs to the scoloptoxin-16 family. In terms of processing, contains 4 disulfide bonds. As to expression, expressed by the venom gland.

It localises to the secreted. This Ethmostigmus rubripes (Giant centipede) protein is U-scoloptoxin(16)-Er10a.